The sequence spans 522 residues: DNA-binding protein Ikaros (522 aa).

Disordered regions lie at residues methionine 1 to arginine 48 and alanine 96 to alanine 115. 4 consecutive C2H2-type zinc fingers follow at residues leucine 125–histidine 147, phenylalanine 153–histidine 175, phenylalanine 181–histidine 203, and histidine 209–histidine 232. Positions lysine 379–lysine 406 are disordered. 2 C2H2-type zinc fingers span residues tyrosine 468–histidine 490 and phenylalanine 496–histidine 520.

The protein belongs to the Ikaros C2H2-type zinc-finger protein family. Expression mainly limited to thymus, spleen and pronephros. Very low expression in liver. No expression in testis, brain, eye and muscle.

Its subcellular location is the nucleus. In terms of biological role, binds and activates the enhancer (delta-A element) of the CD3-delta gene. Functions in the specification and the maturation of the T-lymphocyte. Also interacts with a critical control element in the TDT (terminal deoxynucleotidyltransferase) promoter as well as with the promoters for other genes expressed during early stages of B- and T-cell development. Function is isoform-specific and is modulated by dominant-negative inactive isoforms. This is DNA-binding protein Ikaros (ikzf1) from Oncorhynchus mykiss (Rainbow trout).